We begin with the raw amino-acid sequence, 260 residues long: Putative ABC transporter ATP-binding protein PYRAB01300 (260 aa).

The 233-residue stretch at 2-234 (IEFKDVWFWY…DLRNFSLVEP (233 aa)) folds into the ABC transporter domain. 34-41 (GPNGSGKT) provides a ligand contact to ATP.

Belongs to the ABC transporter superfamily.

It localises to the cell membrane. In terms of biological role, probably part of an ABC transporter complex. Responsible for energy coupling to the transport system. This Pyrococcus abyssi (strain GE5 / Orsay) protein is Putative ABC transporter ATP-binding protein PYRAB01300.